Reading from the N-terminus, the 340-residue chain is uncharacterized protein (340 aa).

The next 2 helical transmembrane spans lie at proline 162–glycine 182 and phenylalanine 239–proline 259.

Its subcellular location is the cell membrane. This is an uncharacterized protein from Mycobacterium tuberculosis (strain CDC 1551 / Oshkosh).